Reading from the N-terminus, the 441-residue chain is Cysteine proteinase (441 aa).

Residues Cys-249 and Cys-290 are joined by a disulfide bond. Cys-252 is an active-site residue. Asn-270 and Asn-345 each carry an N-linked (GlcNAc...) asparagine glycan. Active-site residues include His-381 and Asn-403.

The protein belongs to the peptidase C1 family.

This is Cysteine proteinase (TACP) from Theileria annulata.